The following is a 911-amino-acid chain: Transcription factor E2F7 (911 aa).

Ser94 is subject to Phosphoserine. Residues 141 to 210 (RKQKSLGLLC…VAKNQYSWHG (70 aa)) mediate DNA binding. 3 disordered regions span residues 239 to 281 (QKEL…ANSR), 409 to 433 (SFNS…PYRQ), and 565 to 706 (SPGS…SPLQ). Positions 243–257 (NPIDHKSGERRRDGC) are enriched in basic and acidic residues. Residues 281–366 (RKDKSLKIMS…GRKPAFKWIG (86 aa)) mediate DNA binding. Phosphoserine is present on Ser409. Basic and acidic residues predominate over residues 415-424 (ASERTQRKVN). The segment covering 566 to 579 (PGSGSGSGSVGGGS) has biased composition (gly residues). A compositionally biased stretch (basic and acidic residues) spans 599–621 (ERRLQEEEEEPATKRQCRDHEDG). Residues 669–687 (KATTNGFVSSEWGNPCSNT) show a composition bias toward polar residues. Basic and acidic residues predominate over residues 688–698 (EIEKPSEENES). Position 840 is a phosphoserine (Ser840). Residues 873-911 (FFKTPGSLGDPVLRRKERNQSRSSSSAQRRLEISSGGTD) are disordered.

The protein belongs to the E2F/DP family. Homodimer and heterodimer: mainly forms homodimers and, to a lesser extent, heterodimers with E2F8. Dimerization is important for DNA-binding. Interacts with HIF1A. Interacts with MN1.

The protein resides in the nucleus. Atypical E2F transcription factor that participates in various processes such as angiogenesis, polyploidization of specialized cells and DNA damage response. Mainly acts as a transcription repressor that binds DNA independently of DP proteins and specifically recognizes the E2 recognition site 5'-TTTC[CG]CGC-3'. Directly represses transcription of classical E2F transcription factors such as E2F1. Acts as a regulator of S-phase by recognizing and binding the E2-related site 5'-TTCCCGCC-3' and mediating repression of G1/S-regulated genes. Plays a key role in polyploidization of cells in placenta and liver by regulating the endocycle, probably by repressing genes promoting cytokinesis and antagonizing action of classical E2F proteins (E2F1, E2F2 and/or E2F3). Required for placental development by promoting polyploidization of trophoblast giant cells. Also involved in DNA damage response: up-regulated by p53/TP53 following genotoxic stress and acts as a downstream effector of p53/TP53-dependent repression by mediating repression of indirect p53/TP53 target genes involved in DNA replication. Acts as a promoter of sprouting angiogenesis, possibly by acting as a transcription activator: associates with HIF1A, recognizes and binds the VEGFA promoter, which is different from canonical E2 recognition site, and activates expression of the VEGFA gene. Acts as a negative regulator of keratinocyte differentiation. In Bos taurus (Bovine), this protein is Transcription factor E2F7 (E2F7).